The primary structure comprises 153 residues: Arachidonate 5-lipoxygenase-activating protein (153 aa).

At 1-8 the chain is on the lumenal side; that stretch reads MDQEAMGN. Residues 9-30 form a helical membrane-spanning segment; that stretch reads IVLLAIVTLISVVQNAFFAHKV. At 31–52 the chain is on the cytoplasmic side; the sequence is EHESKTHNGRSFQRTGTPAFER. The chain crosses the membrane as a helical span at residues 53 to 77; that stretch reads VYTANQNCVDAYPTFLVVLWSAGLF. At 78-80 the chain is on the lumenal side; the sequence is CSQ. The chain crosses the membrane as a helical span at residues 81-102; the sequence is VPAAFAGLMYLFVRQKYFVGYL. Residues 103–107 lie on the Cytoplasmic side of the membrane; that stretch reads GERTQ. An intramembrane segment occupies 108–115; it reads STPGYIFG. The chain crosses the membrane as a helical span at residues 116 to 128; that stretch reads KRIILFLFLMSLA. Over 129-153 the chain is Lumenal; that stretch reads GIFNYFLILFFGSDFENYIKTITTT.

It belongs to the MAPEG family. In terms of assembly, homotrimer. Interacts with LTC4S and ALOX5.

The protein localises to the nucleus membrane. The protein resides in the endoplasmic reticulum membrane. Required for leukotriene biosynthesis by ALOX5 (5-lipoxygenase). Anchors ALOX5 to the membrane. Binds arachidonic acid, and could play an essential role in the transfer of arachidonic acid to ALOX5. Binds to MK-886, a compound that blocks the biosynthesis of leukotrienes. The protein is Arachidonate 5-lipoxygenase-activating protein (ALOX5AP) of Sus scrofa (Pig).